Consider the following 148-residue polypeptide: MDTHNKGDSIIRFSVSLQQNLLDELDNRIIKNGYSSRSELVRDMIREKLVEDNWAEDNPNDESKIAVLVVIYDHHQRELNQRMIDIQHASGTHVLCTTHIHMDEHNCLETIILQGNSFEIQRLQLEIGGLRGVKFAKLTKAFSFEYDE.

Ni(2+) contacts are provided by H88, H99, H101, and C107.

It belongs to the transcriptional regulatory CopG/NikR family. It depends on Ni(2+) as a cofactor.

Its function is as follows. Transcriptional regulator. This is Putative nickel-responsive regulator from Helicobacter pylori (strain HPAG1).